The chain runs to 573 residues: MSDKPLTDLTFSSFDLHPALVAGLESAGFTRCTPIQALTLPVALPGGDVAGQAQTGTGKTLAFLVAVMNRLLIRPALADRKPEDPRALILAPTRELAIQIHKDAVKFGADLGLRFALVYGGVDYDKQRELLQQGVDVIIATPGRLIDYVKQHKVVSLHACEICVLDEADRMFDLGFIKDIRFLLRRMPERGTRQTLLFSATLSHRVLELAYEHMNEPEKLVVETETITAARVRQRIYFPSDEEKQTLLLGLLSRSEGARTMVFVNTKAFVERVARTLERHGYRVGVLSGDVPQKKRESLLNRFQKGQLEILVATDVAARGLHIDGVKYVYNYDLPFDAEDYVHRIGRTARLGEEGDAISFACERYAMSLPDIEAYIEQKIPVEPVTTELLTPLPRTPRATVEGEEVDDDAGDSVGTIFREAREQRAADEARRGGGRSGPGGASRSGSGGGRRDGAGADGKPRPPRRKPRVEGEADPAAAPSETPVVVAAAAETPAVTAAEGERAPRKRRRRRNGRPVEGAEPVVASTPVPAPAAPRKPTQVVAKPVRAAAKPSGSPSLLSRIGRRLRSLVSGS.

Positions 9 to 37 (LTFSSFDLHPALVAGLESAGFTRCTPIQA) match the Q motif motif. The region spanning 40-220 (LPVALPGGDV…YEHMNEPEKL (181 aa)) is the Helicase ATP-binding domain. 53–60 (AQTGTGKT) serves as a coordination point for ATP. The DEAD box signature appears at 166–169 (DEAD). Residues 231 to 393 (RVRQRIYFPS…PVTTELLTPL (163 aa)) form the Helicase C-terminal domain. Over residues 391 to 400 (TPLPRTPRAT) the composition is skewed to low complexity. The segment at 391–559 (TPLPRTPRAT…AKPSGSPSLL (169 aa)) is disordered. Residues 402-411 (EGEEVDDDAG) are compositionally biased toward acidic residues. Residues 419 to 432 (REAREQRAADEARR) show a composition bias toward basic and acidic residues. Residues 435–449 (GRSGPGGASRSGSGG) are compositionally biased toward gly residues. The span at 450-461 (GRRDGAGADGKP) shows a compositional bias: basic and acidic residues. Residues 476–499 (PAAAPSETPVVVAAAAETPAVTAA) are compositionally biased toward low complexity. Residues 505-514 (PRKRRRRRNG) show a composition bias toward basic residues. Composition is skewed to low complexity over residues 516–528 (PVEG…ASTP) and 541–559 (VVAK…PSLL).

The protein belongs to the DEAD box helicase family. RhlB subfamily. As to quaternary structure, component of the RNA degradosome, which is a multiprotein complex involved in RNA processing and mRNA degradation.

It localises to the cytoplasm. It carries out the reaction ATP + H2O = ADP + phosphate + H(+). In terms of biological role, DEAD-box RNA helicase involved in RNA degradation. Has RNA-dependent ATPase activity and unwinds double-stranded RNA. This Xanthomonas campestris pv. campestris (strain B100) protein is ATP-dependent RNA helicase RhlB.